We begin with the raw amino-acid sequence, 306 residues long: 4-diphosphocytidyl-2-C-methyl-D-erythritol kinase (306 aa).

Lysine 11 is a catalytic residue. An ATP-binding site is contributed by 98–108 (PIAGGMGGGSA). Aspartate 140 is a catalytic residue.

This sequence belongs to the GHMP kinase family. IspE subfamily.

The catalysed reaction is 4-CDP-2-C-methyl-D-erythritol + ATP = 4-CDP-2-C-methyl-D-erythritol 2-phosphate + ADP + H(+). It participates in isoprenoid biosynthesis; isopentenyl diphosphate biosynthesis via DXP pathway; isopentenyl diphosphate from 1-deoxy-D-xylulose 5-phosphate: step 3/6. Functionally, catalyzes the phosphorylation of the position 2 hydroxy group of 4-diphosphocytidyl-2C-methyl-D-erythritol. The chain is 4-diphosphocytidyl-2-C-methyl-D-erythritol kinase from Leifsonia xyli subsp. xyli (strain CTCB07).